The chain runs to 149 residues: MHCPFCFAVDTKVIDSRLVGEGSSVRRRRQCLVCNERFTTFEVAELVMPRVVKSNDVREPFNEEKLRSGMLRALEKRPVSSDDVEMAINHIKSQLRATGEREVPSKMIGNLVMEQLKKLDKVAYIRFASVYRSFEDIKEFGEEIARLED.

Residues 3 to 34 (CPFCFAVDTKVIDSRLVGEGSSVRRRRQCLVC) fold into a zinc finger. Residues 49–139 (PRVVKSNDVR…VYRSFEDIKE (91 aa)) form the ATP-cone domain.

This sequence belongs to the NrdR family. Zn(2+) serves as cofactor.

Functionally, negatively regulates transcription of bacterial ribonucleotide reductase nrd genes and operons by binding to NrdR-boxes. The protein is Transcriptional repressor NrdR of Escherichia coli O139:H28 (strain E24377A / ETEC).